We begin with the raw amino-acid sequence, 306 residues long: Plant-type L-asparaginase (306 aa).

The active-site Nucleophile is the Thr176. Substrate is bound by residues 203–206 (RVGD) and 225–228 (TGLG).

It belongs to the Ntn-hydrolase family. In terms of assembly, heterotetramer of two alpha and two beta chains arranged as a dimer of alpha/beta heterodimers. The uncleaved protein forms homodimers. Post-translationally, autocleaved. Generates the alpha and beta subunits. The N-terminal residue of the beta subunit is thought to be responsible for the nucleophile hydrolase activity. Predominantly produced in the uncleaved form when gene expression is induced at 37 degrees Celsius with 0.5 mM IPTG. When produced at 42 degrees Celsius without adding IPTG, approximately 90% of the protein is found in the cleaved form, while the remaining 10% is observed as uncleaved precursor. Undergoes complete auto-cleavage within 24 hours at 37 degrees Celsius.

The enzyme catalyses L-asparagine + H2O = L-aspartate + NH4(+). Its activity is regulated as follows. Undergoes auto-cleavage in a temperature-dependent and glycine-independent manner. Metal ions and EDTA do not have any significant effect on enzyme activity, indicating that activity is metal-independent. In terms of biological role, catalyzes the hydrolysis of L-asparagine into L-aspartate and ammonia. Also displays D-asparaginase activity, which is about 10% of the L-asparaginase activity. Does not exhibit glutaminase activity. In Thermococcus kodakarensis (strain ATCC BAA-918 / JCM 12380 / KOD1) (Pyrococcus kodakaraensis (strain KOD1)), this protein is Plant-type L-asparaginase.